Consider the following 1411-residue polypeptide: DNA-directed RNA polymerase subunit beta' (1411 aa).

4 residues coordinate Zn(2+): Cys70, Cys72, Cys85, and Cys88. The Mg(2+) site is built by Asp460, Asp462, and Asp464. Residues Cys814, Cys888, Cys895, and Cys898 each contribute to the Zn(2+) site.

This sequence belongs to the RNA polymerase beta' chain family. As to quaternary structure, the RNAP catalytic core consists of 2 alpha, 1 beta, 1 beta' and 1 omega subunit. When a sigma factor is associated with the core the holoenzyme is formed, which can initiate transcription. The cofactor is Mg(2+). Zn(2+) serves as cofactor.

The catalysed reaction is RNA(n) + a ribonucleoside 5'-triphosphate = RNA(n+1) + diphosphate. DNA-dependent RNA polymerase catalyzes the transcription of DNA into RNA using the four ribonucleoside triphosphates as substrates. This Idiomarina loihiensis (strain ATCC BAA-735 / DSM 15497 / L2-TR) protein is DNA-directed RNA polymerase subunit beta'.